Here is a 317-residue protein sequence, read N- to C-terminus: Ferrochelatase (317 aa).

2 residues coordinate Fe cation: His-192 and Glu-271.

It belongs to the ferrochelatase family.

The protein resides in the cytoplasm. It carries out the reaction heme b + 2 H(+) = protoporphyrin IX + Fe(2+). The protein operates within porphyrin-containing compound metabolism; protoheme biosynthesis; protoheme from protoporphyrin-IX: step 1/1. Catalyzes the ferrous insertion into protoporphyrin IX. In Geobacter metallireducens (strain ATCC 53774 / DSM 7210 / GS-15), this protein is Ferrochelatase.